The sequence spans 318 residues: tRNA-cytidine(32) 2-sulfurtransferase (318 aa).

Positions Met1–Asn29 are disordered. Over residues His16 to Gln27 the composition is skewed to polar residues. The PP-loop motif motif lies at Ser64–Ser69. Residues Cys139, Cys142, and Cys230 each contribute to the [4Fe-4S] cluster site.

It belongs to the TtcA family. In terms of assembly, homodimer. The cofactor is Mg(2+). [4Fe-4S] cluster serves as cofactor.

The protein resides in the cytoplasm. The catalysed reaction is cytidine(32) in tRNA + S-sulfanyl-L-cysteinyl-[cysteine desulfurase] + AH2 + ATP = 2-thiocytidine(32) in tRNA + L-cysteinyl-[cysteine desulfurase] + A + AMP + diphosphate + H(+). The protein operates within tRNA modification. Its function is as follows. Catalyzes the ATP-dependent 2-thiolation of cytidine in position 32 of tRNA, to form 2-thiocytidine (s(2)C32). The sulfur atoms are provided by the cysteine/cysteine desulfurase (IscS) system. The chain is tRNA-cytidine(32) 2-sulfurtransferase from Pseudoalteromonas atlantica (strain T6c / ATCC BAA-1087).